Reading from the N-terminus, the 259-residue chain is Probable metal transport system ATP-binding protein CPn_0348/CP_0412/CPj0348/CpB0355 (259 aa).

One can recognise an ABC transporter domain in the interval 3 to 241 (VKDETFWSVH…TIFQTYGCEI (239 aa)). 41–48 (GPNGAGKS) contacts ATP.

This sequence belongs to the ABC transporter superfamily.

Its subcellular location is the cell inner membrane. Functionally, part of an ATP-driven transport system CPn0346/CPn0347/CPn0348/CPn0349 for a metal. Probably responsible for energy coupling to the transport system. The polypeptide is Probable metal transport system ATP-binding protein CPn_0348/CP_0412/CPj0348/CpB0355 (Chlamydia pneumoniae (Chlamydophila pneumoniae)).